Consider the following 367-residue polypeptide: Alanine racemase (367 aa).

Lys40 functions as the Proton acceptor; specific for D-alanine in the catalytic mechanism. N6-(pyridoxal phosphate)lysine is present on Lys40. Arg136 serves as a coordination point for substrate. Tyr263 functions as the Proton acceptor; specific for L-alanine in the catalytic mechanism. Met310 lines the substrate pocket.

Belongs to the alanine racemase family. Requires pyridoxal 5'-phosphate as cofactor.

It carries out the reaction L-alanine = D-alanine. It functions in the pathway amino-acid biosynthesis; D-alanine biosynthesis; D-alanine from L-alanine: step 1/1. Catalyzes the interconversion of L-alanine and D-alanine. May also act on other amino acids. The protein is Alanine racemase (alr) of Streptococcus thermophilus (strain CNRZ 1066).